A 315-amino-acid polypeptide reads, in one-letter code: Ribosomal RNA small subunit methyltransferase H (315 aa).

Residues G37–H39, D57, F83, D105, and Q112 contribute to the S-adenosyl-L-methionine site.

It belongs to the methyltransferase superfamily. RsmH family.

It localises to the cytoplasm. It carries out the reaction cytidine(1402) in 16S rRNA + S-adenosyl-L-methionine = N(4)-methylcytidine(1402) in 16S rRNA + S-adenosyl-L-homocysteine + H(+). Specifically methylates the N4 position of cytidine in position 1402 (C1402) of 16S rRNA. The polypeptide is Ribosomal RNA small subunit methyltransferase H (Pseudomonas fluorescens (strain SBW25)).